Here is a 1325-residue protein sequence, read N- to C-terminus: uncharacterized protein (1325 aa).

An N-terminal signal peptide occupies residues 1-27 (MHTFTRKVKWPFMFTAIGLTFGIVAVA). The N-palmitoyl cysteine moiety is linked to residue Cys-28. Residue Cys-28 is the site of S-diacylglycerol cysteine attachment. 2 disordered regions span residues 379-402 (RAASSSSEGTIQLKTASDGGGTTQ) and 430-464 (NTNANQTGGGGSGGGGGTSTGSSTGSSTETTTGNS). Residues 436–448 (TGGGGSGGGGGTS) are compositionally biased toward gly residues. The segment covering 449–464 (TGSSTGSSTETTTGNS) has biased composition (low complexity).

It belongs to the MG307/MG309/MG338 family.

It is found in the cell membrane. This is an uncharacterized protein from Mycoplasma pneumoniae (strain ATCC 29342 / M129 / Subtype 1) (Mycoplasmoides pneumoniae).